A 506-amino-acid polypeptide reads, in one-letter code: TOM1-like protein 3 (506 aa).

Residues 12 to 141 (ATNDMLIGPD…ELRSAGIEFP (130 aa)) enclose the VHS domain. One can recognise a GAT domain in the interval 180–268 (DASALSMEEI…VLQHHDDKAK (89 aa)). Disordered stretches follow at residues 266–328 (KAKG…PPSS), 351–384 (ETFENVKPPSTSQSSNHDYSAPIFDEPVPQSKSP), and 398–477 (EQLP…PEDI). A compositionally biased stretch (acidic residues) spans 288 to 298 (DDDDDESDDDF). At Ser-294 the chain carries Phosphoserine. Positions 358–368 (PPSTSQSSNHD) are enriched in polar residues. Residue Ser-383 is modified to Phosphoserine. A compositionally biased stretch (polar residues) spans 450 to 460 (QSRNLSLNPTA). Over residues 468 to 477 (PKKDDKPEDI) the composition is skewed to basic and acidic residues.

This sequence belongs to the TOM1 family. As to expression, preferentially expressed in cauline leaves.

It localises to the membrane. Might contribute to the loading of the ESCRT machinery. This is TOM1-like protein 3 from Arabidopsis thaliana (Mouse-ear cress).